The sequence spans 438 residues: GTPase Der (438 aa).

2 consecutive EngA-type G domains span residues 2–164 (HKVA…PEDD) and 173–343 (IRIS…EKWQ). Residues 8–15 (GRPNVGKS), 55–59 (DTGGL), 116–119 (NKID), 179–186 (GRPNVGKS), 226–230 (DTAGI), and 288–291 (NKWD) each bind GTP. Positions 344 to 428 (SRIGTSELNR…PVRLKWKEKG (85 aa)) constitute a KH-like domain.

The protein belongs to the TRAFAC class TrmE-Era-EngA-EngB-Septin-like GTPase superfamily. EngA (Der) GTPase family. Associates with the 50S ribosomal subunit.

Its function is as follows. GTPase that plays an essential role in the late steps of ribosome biogenesis. In Deinococcus radiodurans (strain ATCC 13939 / DSM 20539 / JCM 16871 / CCUG 27074 / LMG 4051 / NBRC 15346 / NCIMB 9279 / VKM B-1422 / R1), this protein is GTPase Der.